Reading from the N-terminus, the 589-residue chain is Phenylalanine--tRNA ligase beta subunit (589 aa).

The region spanning 302–379 (LPYRKEMVRA…IAYGYNNIQM (78 aa)) is the B5 domain. Mg(2+) is bound by residues D357, D363, E366, and D367.

Belongs to the phenylalanyl-tRNA synthetase beta subunit family. Type 2 subfamily. In terms of assembly, heterotetramer; dimer of two heterodimers formed by FARSA and FARSB. Mg(2+) is required as a cofactor.

Its subcellular location is the cytoplasm. The enzyme catalyses tRNA(Phe) + L-phenylalanine + ATP = L-phenylalanyl-tRNA(Phe) + AMP + diphosphate + H(+). In Mus musculus (Mouse), this protein is Phenylalanine--tRNA ligase beta subunit (Farsb).